A 189-amino-acid polypeptide reads, in one-letter code: Parkinson disease protein 7 homolog (189 aa).

An N-acetylalanine modification is found at alanine 2. Residues cysteine 46 and cysteine 53 are each lipidated (S-palmitoyl cysteine). Tyrosine 67 is modified (phosphotyrosine). The active-site Nucleophile is the cysteine 106. A Cysteine sulfinic acid (-SO2H); alternate modification is found at cysteine 106. A lipid anchor (S-palmitoyl cysteine; alternate) is attached at cysteine 106. Histidine 126 is an active-site residue. Residue lysine 130 forms a Glycyl lysine isopeptide (Lys-Gly) (interchain with G-Cter in SUMO) linkage. Lysine 148 is modified (N6-acetyllysine). Lysine 182 carries the N6-succinyllysine modification.

It belongs to the peptidase C56 family. In terms of assembly, homodimer. Binds EFCAB6/DJBP and PIAS2. Part of a ternary complex containing PARK7, EFCAB6/DJBP and AR. Interacts (via N-terminus) with OTUD7B. Interacts with BBS1, HIPK1, CLCF1 and MTERF. Forms a complex with PINK1 and PRKN. Interacts (via C-terminus) with NCF1; the interaction is enhanced by LPS and modulates NCF1 phosphorylation and membrane translocation. Interacts with NENF. Deglycase activity does not require glutathione as a cofactor, however, glycated glutathione constitutes a PARK7 substrate. is required as a cofactor. In terms of processing, sumoylated on Lys-130 by PIAS2 or PIAS4; which is essential for cell-growth promoting activity and transforming activity. Post-translationally, undergoes cleavage of a C-terminal peptide and subsequent activation of protease activity in response to oxidative stress.

It localises to the cell membrane. The protein resides in the cytoplasm. The protein localises to the nucleus. It is found in the membrane raft. Its subcellular location is the mitochondrion. It localises to the endoplasmic reticulum. It catalyses the reaction N(omega)-(1-hydroxy-2-oxopropyl)-L-arginyl-[protein] + H2O = lactate + L-arginyl-[protein] + H(+). The catalysed reaction is N(6)-(1-hydroxy-2-oxopropyl)-L-lysyl-[protein] + H2O = lactate + L-lysyl-[protein] + H(+). The enzyme catalyses S-(1-hydroxy-2-oxopropyl)-L-cysteinyl-[protein] + H2O = lactate + L-cysteinyl-[protein] + H(+). It carries out the reaction N(omega)-(1-hydroxy-2-oxoethyl)-L-arginyl-[protein] + H2O = L-arginyl-[protein] + glycolate + H(+). It catalyses the reaction N(6)-(1-hydroxy-2-oxoethyl)-L-lysyl-[protein] + H2O = glycolate + L-lysyl-[protein] + H(+). The catalysed reaction is S-(1-hydroxy-2-oxoethyl)-L-cysteinyl-[protein] + H2O = glycolate + L-cysteinyl-[protein] + H(+). The enzyme catalyses N(2)-(1-hydroxy-2-oxopropyl)-dGTP + H2O = lactate + dGTP + H(+). It carries out the reaction N(2)-(1-hydroxy-2-oxopropyl)-GTP + H2O = lactate + GTP + H(+). It catalyses the reaction N(2)-(1-hydroxy-2-oxopropyl)-GDP + H2O = lactate + GDP + H(+). The catalysed reaction is N(2)-(1-hydroxy-2-oxopropyl)-GMP + H2O = lactate + GMP + H(+). The enzyme catalyses N(2)-(1-hydroxy-2-oxoethyl)-dGTP + H2O = dGTP + glycolate + H(+). It carries out the reaction N(2)-(1-hydroxy-2-oxoethyl)-GTP + H2O = glycolate + GTP + H(+). It catalyses the reaction N(2)-(1-hydroxy-2-oxoethyl)-GDP + H2O = glycolate + GDP + H(+). The catalysed reaction is N(2)-(1-hydroxy-2-oxoethyl)-GMP + H2O = glycolate + GMP + H(+). The enzyme catalyses an N(2)-(1-hydroxy-2-oxopropyl)-guanosine in RNA + H2O = a guanosine in RNA + lactate + H(+). It carries out the reaction an N(2)-(1-hydroxy-2-oxopropyl)-2'-deoxyguanosine in DNA + H2O = a 2'-deoxyguanosine in DNA + lactate + H(+). It catalyses the reaction an N(2)-(1-hydroxy-2-oxoethyl)-guanosine in RNA + H2O = a guanosine in RNA + glycolate + H(+). The catalysed reaction is an N(2)-(1-hydroxy-2-oxoethyl)-2'-deoxyguanosine in DNA + H2O = a 2'-deoxyguanosine in DNA + glycolate + H(+). Its function is as follows. Multifunctional protein with controversial molecular function which plays an important role in cell protection against oxidative stress and cell death acting as oxidative stress sensor and redox-sensitive chaperone and protease. It is involved in neuroprotective mechanisms like the stabilization of NFE2L2 and PINK1 proteins, male fertility as a positive regulator of androgen signaling pathway as well as cell growth and transformation through, for instance, the modulation of NF-kappa-B signaling pathway. Has been described as a protein and nucleotide deglycase that catalyzes the deglycation of the Maillard adducts formed between amino groups of proteins or nucleotides and reactive carbonyl groups of glyoxals. But this function is rebuted by other works. As a protein deglycase, repairs methylglyoxal- and glyoxal-glycated proteins, and releases repaired proteins and lactate or glycolate, respectively. Deglycates cysteine, arginine and lysine residues in proteins, and thus reactivates these proteins by reversing glycation by glyoxals. Acts on early glycation intermediates (hemithioacetals and aminocarbinols), preventing the formation of advanced glycation endproducts (AGE) that cause irreversible damage. Also functions as a nucleotide deglycase able to repair glycated guanine in the free nucleotide pool (GTP, GDP, GMP, dGTP) and in DNA and RNA. Is thus involved in a major nucleotide repair system named guanine glycation repair (GG repair), dedicated to reversing methylglyoxal and glyoxal damage via nucleotide sanitization and direct nucleic acid repair. Protects histones from adduction by methylglyoxal, controls the levels of methylglyoxal-derived argininine modifications on chromatin. Able to remove the glycations and restore histone 3, histone glycation disrupts both local and global chromatin architecture by altering histone-DNA interactions as well as histone acetylation and ubiquitination levels. Displays a very low glyoxalase activity that may reflect its deglycase activity. Eliminates hydrogen peroxide and protects cells against hydrogen peroxide-induced cell death. Required for correct mitochondrial morphology and function as well as for autophagy of dysfunctional mitochondria. Plays a role in regulating expression or stability of the mitochondrial uncoupling proteins SLC25A14 and SLC25A27 in dopaminergic neurons of the substantia nigra pars compacta and attenuates the oxidative stress induced by calcium entry into the neurons via L-type channels during pacemaking. Regulates astrocyte inflammatory responses, may modulate lipid rafts-dependent endocytosis in astrocytes and neuronal cells. In pancreatic islets, involved in the maintenance of mitochondrial reactive oxygen species (ROS) levels and glucose homeostasis in an age- and diet dependent manner. Protects pancreatic beta cells from cell death induced by inflammatory and cytotoxic setting. Binds to a number of mRNAs containing multiple copies of GG or CC motifs and partially inhibits their translation but dissociates following oxidative stress. Metal-binding protein able to bind copper as well as toxic mercury ions, enhances the cell protection mechanism against induced metal toxicity. In macrophages, interacts with the NADPH oxidase subunit NCF1 to direct NADPH oxidase-dependent ROS production, and protects against sepsis. This is Parkinson disease protein 7 homolog from Chlorocebus aethiops (Green monkey).